Here is an 843-residue protein sequence, read N- to C-terminus: Protein translocase subunit SecA 1 (843 aa).

Residues Gln91, 109–113 (GEGKT), and Asp498 contribute to the ATP site. The segment covering 799-813 (EAKHVSAEDGKEKVK) has biased composition (basic and acidic residues). A disordered region spans residues 799-826 (EAKHVSAEDGKEKVKPKPIVKGDQVGRN). Zn(2+) contacts are provided by Cys829, Cys831, Cys840, and His841.

This sequence belongs to the SecA family. As to quaternary structure, monomer and homodimer. Part of the essential Sec protein translocation apparatus which comprises SecA, SecYEG and auxiliary proteins SecDF. Other proteins may also be involved. Zn(2+) serves as cofactor.

The protein resides in the cell membrane. It is found in the cytoplasm. It catalyses the reaction ATP + H2O + cellular proteinSide 1 = ADP + phosphate + cellular proteinSide 2.. Functionally, part of the Sec protein translocase complex. Interacts with the SecYEG preprotein conducting channel. Has a central role in coupling the hydrolysis of ATP to the transfer of proteins into and across the cell membrane, serving as an ATP-driven molecular motor driving the stepwise translocation of polypeptide chains across the membrane. This chain is Protein translocase subunit SecA 1, found in Staphylococcus aureus (strain N315).